The following is a 319-amino-acid chain: Putative olfactory receptor 52L2 (319 aa).

Residues 1-43 are Extracellular-facing; sequence MNLDSFFSFLLKSLIMALSNSSWRLPQPSFFLVGIPGLEESQH. N20 is a glycosylation site (N-linked (GlcNAc...) asparagine). Residues 44–64 traverse the membrane as a helical segment; it reads WIALPLGILYLLALVGNVTIL. The Cytoplasmic segment spans residues 65 to 72; sequence FIIWMDPS. The helical transmembrane segment at 73 to 93 threads the bilayer; the sequence is LHQSMYLFLSMLAAIDLVVAS. Topologically, residues 94-117 are extracellular; the sequence is STAPKALAVLLVRAQEIGYTVCLI. C115 and C207 form a disulfide bridge. The chain crosses the membrane as a helical span at residues 118 to 138; that stretch reads QMFFTHAFSSMESGVLVAMAL. The Cytoplasmic segment spans residues 139 to 157; that stretch reads DRYVAICHPLHHSTILHPG. A helical membrane pass occupies residues 158–178; the sequence is VIGHIGMVVLVRGLLLLIPFL. Topologically, residues 179–214 are extracellular; that stretch reads ILLRKLIFCQATIIGHAYCEHMAVVKLACSETTVNR. Residues 215 to 235 traverse the membrane as a helical segment; sequence AYGLTVALLVVGLDVLAIGVS. At 236-255 the chain is on the cytoplasmic side; that stretch reads YAHILQAVLKVPGNEARLKA. Residues 256-276 form a helical membrane-spanning segment; sequence FSTCGSHVCVILVFYIPGMFS. The Extracellular segment spans residues 277–291; it reads FLTHRFGHHVPHHVH. A helical transmembrane segment spans residues 292–312; the sequence is VLLAILYRLVPPALNPLVYRV. Topologically, residues 313 to 319 are cytoplasmic; that stretch reads KTQKIHQ.

The protein belongs to the G-protein coupled receptor 1 family.

Its subcellular location is the cell membrane. Its function is as follows. Odorant receptor. The polypeptide is Putative olfactory receptor 52L2 (OR52L2P) (Homo sapiens (Human)).